The sequence spans 123 residues: Probable histone H2B 4 (123 aa).

Residues 1–30 (MPPKPSAKGAKKAAKTVVAKPKDGKKRRHA) are disordered. An O-linked (GlcNAc) serine glycan is attached at Ser110. Lys118 is covalently cross-linked (Glycyl lysine isopeptide (Lys-Gly) (interchain with G-Cter in ubiquitin)).

The protein belongs to the histone H2B family. As to quaternary structure, the nucleosome is a histone octamer containing two molecules each of H2A, H2B, H3 and H4 assembled in one H3-H4 heterotetramer and two H2A-H2B heterodimers. The octamer wraps approximately 147 bp of DNA. Post-translationally, monoubiquitination of Lys-118 gives a specific tag for epigenetic transcriptional activation and is also prerequisite for histone H3 'Lys-4' and 'Lys-79' methylation. GlcNAcylation at Ser-110 promotes monoubiquitination of Lys-118. It fluctuates in response to extracellular glucose, and associates with transcribed genes.

The protein resides in the nucleus. It localises to the chromosome. Its function is as follows. Core component of nucleosome. Nucleosomes wrap and compact DNA into chromatin, limiting DNA accessibility to the cellular machineries which require DNA as a template. Histones thereby play a central role in transcription regulation, DNA repair, DNA replication and chromosomal stability. DNA accessibility is regulated via a complex set of post-translational modifications of histones, also called histone code, and nucleosome remodeling. The sequence is that of Probable histone H2B 4 (his-48) from Caenorhabditis elegans.